The primary structure comprises 459 residues: Probable 1,4-beta-D-glucan cellobiohydrolase C (459 aa).

A signal peptide spans 1-18 (MHYPLSLALAFLPFGIQA). Positions 19–54 (QQTLWGQCGGQGYSGATSCVAGATCATVNEYYAQCT) constitute a CBM1 domain. 2 disulfides stabilise this stretch: C26/C43 and C37/C53. Residues 54–94 (TPAAGTSSATTLKTTTSSTTAAVTTTTTTQSPTGSASPTTT) are thr-rich linker. The tract at residues 76-97 (VTTTTTTQSPTGSASPTTTASA) is disordered. The catalytic stretch occupies residues 95-459 (ASASGNPFSG…QLLTNANPAF (365 aa)). The active site involves D189. A disulfide bridge connects residues C190 and C249. D235 (proton donor) is an active-site residue. The N-linked (GlcNAc...) asparagine glycan is linked to N303. A disulfide bridge connects residues C381 and C428. The active-site Nucleophile is the D414.

It belongs to the glycosyl hydrolase 6 (cellulase B) family.

It is found in the secreted. The catalysed reaction is Hydrolysis of (1-&gt;4)-beta-D-glucosidic linkages in cellulose and cellotetraose, releasing cellobiose from the non-reducing ends of the chains.. Its function is as follows. The biological conversion of cellulose to glucose generally requires three types of hydrolytic enzymes: (1) Endoglucanases which cut internal beta-1,4-glucosidic bonds; (2) Exocellobiohydrolases that cut the disaccharide cellobiose from the non-reducing end of the cellulose polymer chain; (3) Beta-1,4-glucosidases which hydrolyze the cellobiose and other short cello-oligosaccharides to glucose. The polypeptide is Probable 1,4-beta-D-glucan cellobiohydrolase C (cbhC) (Aspergillus niger (strain ATCC MYA-4892 / CBS 513.88 / FGSC A1513)).